A 362-amino-acid chain; its full sequence is GTP cyclohydrolase FolE2 (362 aa).

This sequence belongs to the GTP cyclohydrolase IV family.

The catalysed reaction is GTP + H2O = 7,8-dihydroneopterin 3'-triphosphate + formate + H(+). Its pathway is cofactor biosynthesis; 7,8-dihydroneopterin triphosphate biosynthesis; 7,8-dihydroneopterin triphosphate from GTP: step 1/1. Converts GTP to 7,8-dihydroneopterin triphosphate. The sequence is that of GTP cyclohydrolase FolE2 from Jannaschia sp. (strain CCS1).